Here is a 217-residue protein sequence, read N- to C-terminus: Large ribosomal subunit protein uL1A (217 aa).

Position 2 is an N-acetylserine (serine 2). Lysine 47 carries the post-translational modification N6-methyllysine; by RKM5. A phosphoserine mark is found at serine 79 and serine 86.

It belongs to the universal ribosomal protein uL1 family. In terms of assembly, component of the large ribosomal subunit (LSU). Mature yeast ribosomes consist of a small (40S) and a large (60S) subunit. The 40S small subunit contains 1 molecule of ribosomal RNA (18S rRNA) and 33 different proteins (encoded by 57 genes). The large 60S subunit contains 3 rRNA molecules (25S, 5.8S and 5S rRNA) and 46 different proteins (encoded by 81 genes). uL1 forms part of the L1 stalk. Post-translationally, N-terminally acetylated by acetyltransferase NatA.

The protein resides in the cytoplasm. Functionally, component of the ribosome, a large ribonucleoprotein complex responsible for the synthesis of proteins in the cell. The small ribosomal subunit (SSU) binds messenger RNAs (mRNAs) and translates the encoded message by selecting cognate aminoacyl-transfer RNA (tRNA) molecules. The large subunit (LSU) contains the ribosomal catalytic site termed the peptidyl transferase center (PTC), which catalyzes the formation of peptide bonds, thereby polymerizing the amino acids delivered by tRNAs into a polypeptide chain. The nascent polypeptides leave the ribosome through a tunnel in the LSU and interact with protein factors that function in enzymatic processing, targeting, and the membrane insertion of nascent chains at the exit of the ribosomal tunnel. uL1 forms part of the L1 stalk, a mobile element that plays a role in evacuating the exit-site tRNA. The polypeptide is Large ribosomal subunit protein uL1A (Saccharomyces cerevisiae (strain ATCC 204508 / S288c) (Baker's yeast)).